The following is a 314-amino-acid chain: Solute carrier family 25 member 44 (314 aa).

3 Solcar repeats span residues 18 to 100 (KKFY…TRKF), 107 to 210 (SNTV…YAEQ), and 220 to 302 (PHIV…LKKL). Helical transmembrane passes span 20-42 (FYVF…TLIR), 71-90 (TGLY…GQCY), 113-133 (LVAG…IDVV), 185-201 (GYVA…AVWW), 222-239 (IVFQ…ASIL), and 278-296 (LSAR…VVGY).

Belongs to the mitochondrial carrier (TC 2.A.29) family.

Its subcellular location is the mitochondrion membrane. It carries out the reaction L-valine(in) = L-valine(out). The enzyme catalyses L-leucine(in) = L-leucine(out). Functionally, mitochondrial solute transporter which transports branched-chain amino acid (BCAA; valine, leucine and isoleucine) into mitochondria in brown adipose tissue (BAT). BAT is involved in BCAA catabolism and actively utilizes BCAA in the mitochondria for thermogenesis. This is Solute carrier family 25 member 44 from Pongo abelii (Sumatran orangutan).